The primary structure comprises 336 residues: MIVLGIESSCDETGLAIYDYSKKKLIADELYSQVKLHKKYGGVVPELASREHIAKLNLLAKKIFKETGLSFEDIDCIAYTAMPGLVGALMVGATFAKTLGLIHNIDTIAVHHLEGHLLSPLLDHNSNIEYPFVALLVSGGHTQLFEVKEFGEYSLLGESIDDAAGEAFDKTAKLLGMGYPGGVEVANLADQATDKSKYILPRPMKNKPNLDFSFSGLKTAVLNTWYDEQDQSLENKANLCYAFQDAAIDVLVSKCAKALQKTKNTRLVISGGVSANKLLRHQLDLLAKNRGYQIFFPPMKYCTDNGAMIAQAGAYRYVNGFKDSNLEINVKARSPL.

Residues H112 and H116 each coordinate Fe cation. Substrate contacts are provided by residues 136-140 (LVSGG), D169, G182, and N276. D304 contributes to the Fe cation binding site.

This sequence belongs to the KAE1 / TsaD family. Requires Fe(2+) as cofactor.

It is found in the cytoplasm. It catalyses the reaction L-threonylcarbamoyladenylate + adenosine(37) in tRNA = N(6)-L-threonylcarbamoyladenosine(37) in tRNA + AMP + H(+). Its function is as follows. Required for the formation of a threonylcarbamoyl group on adenosine at position 37 (t(6)A37) in tRNAs that read codons beginning with adenine. Is involved in the transfer of the threonylcarbamoyl moiety of threonylcarbamoyl-AMP (TC-AMP) to the N6 group of A37, together with TsaE and TsaB. TsaD likely plays a direct catalytic role in this reaction. In Francisella tularensis subsp. novicida (strain U112), this protein is tRNA N6-adenosine threonylcarbamoyltransferase.